Here is a 173-residue protein sequence, read N- to C-terminus: Crossover junction endodeoxyribonuclease RuvC (173 aa).

Residues D8, E67, and D139 contribute to the active site. The Mg(2+) site is built by D8, E67, and D139.

Belongs to the RuvC family. In terms of assembly, homodimer which binds Holliday junction (HJ) DNA. The HJ becomes 2-fold symmetrical on binding to RuvC with unstacked arms; it has a different conformation from HJ DNA in complex with RuvA. In the full resolvosome a probable DNA-RuvA(4)-RuvB(12)-RuvC(2) complex forms which resolves the HJ. Mg(2+) serves as cofactor.

It is found in the cytoplasm. It carries out the reaction Endonucleolytic cleavage at a junction such as a reciprocal single-stranded crossover between two homologous DNA duplexes (Holliday junction).. The RuvA-RuvB-RuvC complex processes Holliday junction (HJ) DNA during genetic recombination and DNA repair. Endonuclease that resolves HJ intermediates. Cleaves cruciform DNA by making single-stranded nicks across the HJ at symmetrical positions within the homologous arms, yielding a 5'-phosphate and a 3'-hydroxyl group; requires a central core of homology in the junction. The consensus cleavage sequence is 5'-(A/T)TT(C/G)-3'. Cleavage occurs on the 3'-side of the TT dinucleotide at the point of strand exchange. HJ branch migration catalyzed by RuvA-RuvB allows RuvC to scan DNA until it finds its consensus sequence, where it cleaves and resolves the cruciform DNA. This Aeromonas salmonicida (strain A449) protein is Crossover junction endodeoxyribonuclease RuvC.